A 133-amino-acid polypeptide reads, in one-letter code: UPF0102 protein CYA_0680 (133 aa).

This sequence belongs to the UPF0102 family.

The protein is UPF0102 protein CYA_0680 of Synechococcus sp. (strain JA-3-3Ab) (Cyanobacteria bacterium Yellowstone A-Prime).